Consider the following 300-residue polypeptide: Protein YIF1B-B (300 aa).

The disordered stretch occupies residues 1–46 (MNQESSFRAPPKRRVRGSNPNISNPHQLFDDTSGGPVPHGGDFPNH). Residues 1 to 142 (MNQESSFRAP…APRFDINAPD (142 aa)) are Cytoplasmic-facing. The chain crosses the membrane as a helical span at residues 143 to 163 (LYIPVMAFITYILVAGLALGT). The Extracellular segment spans residues 164–178 (QSRFSPEILGMQASS). The helical transmembrane segment at 179 to 199 (ALAWLIVEVLAILLSLYLVTV) threads the bilayer. At 200–205 (NTDLTT) the chain is on the cytoplasmic side. The helical transmembrane segment at 206–226 (VDLVAFSGYKYVGMISGVIAG) threads the bilayer. Residue Leu-227 is a topological domain, extracellular. The helical transmembrane segment at 228–248 (LFGNTGYYVVLAWCCISIVFF) threads the bilayer. Residues 249–278 (MIRTLRLKILSEAAAEGVLVRGARNQLRMY) lie on the Cytoplasmic side of the membrane. Residues 279–299 (LTMAIAAVQPIFMYWLTYHLV) traverse the membrane as a helical segment. A topological domain (extracellular) is located at residue Arg-300.

It belongs to the YIF1 family.

It is found in the endoplasmic reticulum membrane. Its subcellular location is the golgi apparatus membrane. The protein localises to the endoplasmic reticulum-Golgi intermediate compartment membrane. Functions in endoplasmic reticulum to Golgi vesicle-mediated transport and regulates the proper organization of the endoplasmic reticulum and the Golgi. Plays a key role in targeting to neuronal dendrites receptors such as HTR1A. Plays also a role in primary cilium and sperm flagellum assembly probably through protein transport to these compartments. This Xenopus laevis (African clawed frog) protein is Protein YIF1B-B (yif1b-b).